A 712-amino-acid polypeptide reads, in one-letter code: Ribosomal RNA large subunit methyltransferase K/L (712 aa).

Residues 43–154 enclose the THUMP domain; sequence TAYRCCLWTR…GEKGVLGLDM (112 aa).

The protein belongs to the methyltransferase superfamily. RlmKL family.

It localises to the cytoplasm. The catalysed reaction is guanosine(2445) in 23S rRNA + S-adenosyl-L-methionine = N(2)-methylguanosine(2445) in 23S rRNA + S-adenosyl-L-homocysteine + H(+). The enzyme catalyses guanosine(2069) in 23S rRNA + S-adenosyl-L-methionine = N(2)-methylguanosine(2069) in 23S rRNA + S-adenosyl-L-homocysteine + H(+). Specifically methylates the guanine in position 2445 (m2G2445) and the guanine in position 2069 (m7G2069) of 23S rRNA. This is Ribosomal RNA large subunit methyltransferase K/L from Photobacterium profundum (strain SS9).